Reading from the N-terminus, the 570-residue chain is Sulfite reductase [NADPH] hemoprotein beta-component (570 aa).

4 residues coordinate [4Fe-4S] cluster: cysteine 434, cysteine 440, cysteine 479, and cysteine 483. Cysteine 483 lines the siroheme pocket.

The protein belongs to the nitrite and sulfite reductase 4Fe-4S domain family. As to quaternary structure, alpha(8)-beta(8). The alpha component is a flavoprotein, the beta component is a hemoprotein. Siroheme is required as a cofactor. [4Fe-4S] cluster serves as cofactor.

It catalyses the reaction hydrogen sulfide + 3 NADP(+) + 3 H2O = sulfite + 3 NADPH + 4 H(+). Its pathway is sulfur metabolism; hydrogen sulfide biosynthesis; hydrogen sulfide from sulfite (NADPH route): step 1/1. Component of the sulfite reductase complex that catalyzes the 6-electron reduction of sulfite to sulfide. This is one of several activities required for the biosynthesis of L-cysteine from sulfate. The polypeptide is Sulfite reductase [NADPH] hemoprotein beta-component (Escherichia coli (strain SMS-3-5 / SECEC)).